A 196-amino-acid chain; its full sequence is Large ribosomal subunit protein uL18 (196 aa).

It belongs to the universal ribosomal protein uL18 family. Part of the 50S ribosomal subunit. Contacts the 5S and 23S rRNAs.

In terms of biological role, this is one of the proteins that bind and probably mediate the attachment of the 5S RNA into the large ribosomal subunit, where it forms part of the central protuberance. This chain is Large ribosomal subunit protein uL18, found in Sulfurisphaera tokodaii (strain DSM 16993 / JCM 10545 / NBRC 100140 / 7) (Sulfolobus tokodaii).